Here is a 237-residue protein sequence, read N- to C-terminus: Methylthioribulose-1-phosphate dehydratase (237 aa).

Cysteine 97 is a substrate binding site. The Zn(2+) site is built by histidine 114 and histidine 116. The active-site Proton donor/acceptor is the glutamate 143. Histidine 199 is a binding site for Zn(2+).

The protein belongs to the aldolase class II family. MtnB subfamily. Zn(2+) is required as a cofactor.

It is found in the cytoplasm. The catalysed reaction is 5-(methylsulfanyl)-D-ribulose 1-phosphate = 5-methylsulfanyl-2,3-dioxopentyl phosphate + H2O. Its pathway is amino-acid biosynthesis; L-methionine biosynthesis via salvage pathway; L-methionine from S-methyl-5-thio-alpha-D-ribose 1-phosphate: step 2/6. Functionally, catalyzes the dehydration of methylthioribulose-1-phosphate (MTRu-1-P) into 2,3-diketo-5-methylthiopentyl-1-phosphate (DK-MTP-1-P). This chain is Methylthioribulose-1-phosphate dehydratase, found in Coccidioides posadasii (strain C735) (Valley fever fungus).